We begin with the raw amino-acid sequence, 371 residues long: Putative HAD-like hydrolase Noc_2718 (371 aa).

Positions 1–288 are HAD-like hydrolase; the sequence is MKQKILLCSD…TGREESAEEE (288 aa). The YcgL domain maps to 291–371; the sequence is QSCAIYRSCK…QLSSREYRRS (81 aa).

The protein in the N-terminal section; belongs to the HAD-like hydrolase superfamily.

The sequence is that of Putative HAD-like hydrolase Noc_2718 from Nitrosococcus oceani (strain ATCC 19707 / BCRC 17464 / JCM 30415 / NCIMB 11848 / C-107).